Consider the following 463-residue polypeptide: Fumarate hydratase class II (463 aa).

Substrate is bound by residues 98 to 100, 129 to 132, 139 to 141, and T187; these read SGT, HPND, and SSN. The active-site Proton donor/acceptor is the H188. Residue S318 is part of the active site. Residues S319 and 324 to 326 contribute to the substrate site; that span reads KVN.

It belongs to the class-II fumarase/aspartase family. Fumarase subfamily. In terms of assembly, homotetramer.

It localises to the cytoplasm. The enzyme catalyses (S)-malate = fumarate + H2O. The protein operates within carbohydrate metabolism; tricarboxylic acid cycle; (S)-malate from fumarate: step 1/1. Its function is as follows. Involved in the TCA cycle. Catalyzes the stereospecific interconversion of fumarate to L-malate. The chain is Fumarate hydratase class II from Caulobacter vibrioides (strain ATCC 19089 / CIP 103742 / CB 15) (Caulobacter crescentus).